The primary structure comprises 166 residues: Interferon gamma (166 aa).

Residues 1–23 (MKYTSYILAFQLCIVLGSLGCYC) form the signal peptide. Position 24 is a pyrrolidone carboxylic acid (Q24). N48, N86, and N120 each carry an N-linked (GlcNAc...) asparagine glycan.

This sequence belongs to the type II (or gamma) interferon family. Homodimer. Interacts with IFNGR1 (via extracellular domain); this interaction promotes IFNGR1 dimerization. In terms of tissue distribution, released primarily from activated T lymphocytes.

The protein localises to the secreted. Type II interferon produced by immune cells such as T-cells and NK cells that plays crucial roles in antimicrobial, antiviral, and antitumor responses by activating effector immune cells and enhancing antigen presentation. Primarily signals through the JAK-STAT pathway after interaction with its receptor IFNGR1 to affect gene regulation. Upon IFNG binding, IFNGR1 intracellular domain opens out to allow association of downstream signaling components JAK2, JAK1 and STAT1, leading to STAT1 activation, nuclear translocation and transcription of IFNG-regulated genes. Many of the induced genes are transcription factors such as IRF1 that are able to further drive regulation of a next wave of transcription. Plays a role in class I antigen presentation pathway by inducing a replacement of catalytic proteasome subunits with immunoproteasome subunits. In turn, increases the quantity, quality, and repertoire of peptides for class I MHC loading. Increases the efficiency of peptide generation also by inducing the expression of activator PA28 that associates with the proteasome and alters its proteolytic cleavage preference. Up-regulates as well MHC II complexes on the cell surface by promoting expression of several key molecules such as cathepsins B/CTSB, H/CTSH, and L/CTSL. Participates in the regulation of hematopoietic stem cells during development and under homeostatic conditions by affecting their development, quiescence, and differentiation. This chain is Interferon gamma (IFNG), found in Saimiri sciureus (Common squirrel monkey).